The following is a 208-amino-acid chain: Uracil phosphoribosyltransferase (208 aa).

5-phospho-alpha-D-ribose 1-diphosphate is bound by residues Arg78, Arg103, and 130–138 (DPMLATGGS). Uracil-binding positions include Ile193 and 198–200 (GDA). Residue Asp199 coordinates 5-phospho-alpha-D-ribose 1-diphosphate.

The protein belongs to the UPRTase family. The cofactor is Mg(2+).

It carries out the reaction UMP + diphosphate = 5-phospho-alpha-D-ribose 1-diphosphate + uracil. The protein operates within pyrimidine metabolism; UMP biosynthesis via salvage pathway; UMP from uracil: step 1/1. With respect to regulation, allosterically activated by GTP. Catalyzes the conversion of uracil and 5-phospho-alpha-D-ribose 1-diphosphate (PRPP) to UMP and diphosphate. This chain is Uracil phosphoribosyltransferase, found in Salmonella agona (strain SL483).